We begin with the raw amino-acid sequence, 123 residues long: Large ribosomal subunit protein uL14 (123 aa).

This sequence belongs to the universal ribosomal protein uL14 family. In terms of assembly, part of the 50S ribosomal subunit. Forms a cluster with proteins L3 and L19. In the 70S ribosome, L14 and L19 interact and together make contacts with the 16S rRNA in bridges B5 and B8.

In terms of biological role, binds to 23S rRNA. Forms part of two intersubunit bridges in the 70S ribosome. This is Large ribosomal subunit protein uL14 from Zymomonas mobilis subsp. mobilis (strain ATCC 31821 / ZM4 / CP4).